Here is a 299-residue protein sequence, read N- to C-terminus: tRNA dimethylallyltransferase (299 aa).

13 to 20 (GPTASGKT) contributes to the ATP binding site. 15-20 (TASGKT) lines the substrate pocket. The interaction with substrate tRNA stretch occupies residues 38–41 (DSRQ).

Belongs to the IPP transferase family. As to quaternary structure, monomer. Mg(2+) serves as cofactor.

It carries out the reaction adenosine(37) in tRNA + dimethylallyl diphosphate = N(6)-dimethylallyladenosine(37) in tRNA + diphosphate. In terms of biological role, catalyzes the transfer of a dimethylallyl group onto the adenine at position 37 in tRNAs that read codons beginning with uridine, leading to the formation of N6-(dimethylallyl)adenosine (i(6)A). The polypeptide is tRNA dimethylallyltransferase (Prochlorococcus marinus (strain MIT 9515)).